An 881-amino-acid chain; its full sequence is MAMKRVVFLLLLVAASALVKSSRGGGGGEEKLGKFYGWRRHLSSGPAASSLVLSGDLVDKIWSVCLQDIVSPEDTFGFGESFAWDELSSHSTEDELKATLFMELMALLPPEKSSFTYDCIRANCFSLGVPQIFSVALSNYLESQKSLVGSNFYPRRRLVDKLIGDAPSMAPAFAPSMSSGGEVHSPLSVAEAPLTPSNSLNMEPPSPYYPSKSAHKHQGVAPPVSPSEEYHDYMKVVLIAVLPTAALSFLAAFLCFYCCGCNKSKVSVGEQRDDHPLLHLQFSNLPGSSPDVHVPASPLHKDDHGVRPSNAGVSMSKCFPCCFKTSSDATTPTLVTGGTQENNATSDAPKLMPPPPPPPPPPPPPPPPPPPRPPPPPPPIKKGAPPPAPPKATMARFPKLSPTESSRSEESSASELASESSETEVNAPRAKLRPFYWDKVLANPDQSMAWHDIKFGSFHVNEEMIEELFGYGAGNQNNVKDKEISIADPSPQHVSLLDVKKSCNLAVVFKAMNVRAEEIHDALVEGNELPRLLLETILRMKPTDEEEQKLRLYNGDCSQLGLAEQVMKALIDIPFAFERIRALLFMSSLQEDASSLRESFLQLEAACGELKHRLFLKLLEAILKTGNRLNDGTFRGGANAFKLDTLLKLSDVKGADGKTTLLHFVVQEIIRSEGVREARLAMENGRSPPFPSTSDDNSNESLQEDGNYYSNLGLKIVSGLSNELDNVKRVAALDADALSTSVANLRHELLRAKEFLNSDMASLEENSGFHRSLESFIEHAETETNFLLKEDKRLRMLVKRTIRYFHGNDEKDDGFRLFVIVRDFLVMLDKACKEVGASQKKATNKSQANGNSNNPSSQSNPQEQQFPAVLDHHFDSSDSND.

Positions 1 to 24 are cleaved as a signal peptide; the sequence is MAMKRVVFLLLLVAASALVKSSRG. Positions 194–223 are disordered; that stretch reads LTPSNSLNMEPPSPYYPSKSAHKHQGVAPP. A helical transmembrane segment spans residues 236–256; the sequence is VVLIAVLPTAALSFLAAFLCF. Over residues 333 to 346 the composition is skewed to polar residues; that stretch reads TLVTGGTQENNATS. Disordered regions lie at residues 333–427, 683–703, and 837–881; these read TLVT…EVNA, ENGRSPPFPSTSDDNSNESLQ, and ASQK…DSND. Over residues 351-390 the composition is skewed to pro residues; the sequence is LMPPPPPPPPPPPPPPPPPPPRPPPPPPPIKKGAPPPAPP. Positions 400-424 are enriched in low complexity; sequence LSPTESSRSEESSASELASESSETE. Positions 422–854 constitute an FH2 domain; the sequence is ETEVNAPRAK…KSQANGNSNN (433 aa). Polar residues predominate over residues 692 to 701; sequence STSDDNSNES. Positions 846 to 865 are enriched in low complexity; sequence SQANGNSNNPSSQSNPQEQQ. Over residues 870–881 the composition is skewed to basic and acidic residues; the sequence is LDHHFDSSDSND.

Belongs to the formin-like family. Class-I subfamily.

The protein resides in the membrane. The polypeptide is Formin-like protein 10 (FH10) (Oryza sativa subsp. japonica (Rice)).